Consider the following 205-residue polypeptide: Arginine exporter protein ArgO (205 aa).

The next 6 helical transmembrane spans lie at 1 to 21 (MLAV…PLGP), 42 to 62 (LCAL…SALL), 67 to 87 (LLLA…GWGA), 111 to 131 (ILVT…DTFV), 147 to 167 (WFAL…AFLA), and 185 to 205 (LFVG…GFGL).

This sequence belongs to the LysE/ArgO transporter (TC 2.A.75) family.

Its subcellular location is the cell inner membrane. The enzyme catalyses L-arginine(in) = L-arginine(out). Functionally, involved in the export of arginine. Important to control the intracellular level of arginine and the correct balance between arginine and lysine. In Yersinia pseudotuberculosis serotype O:3 (strain YPIII), this protein is Arginine exporter protein ArgO.